The chain runs to 571 residues: uncharacterized protein (571 aa).

The next 11 helical transmembrane spans lie at 5-27, 34-56, 61-79, 92-114, 161-183, 391-408, 412-434, 455-474, 484-506, 513-532, and 547-569; these read VILN…GYLV, TFVL…LNIT, IGSL…QGGA, LLAS…AWIF, TVGY…ATIF, FIFF…GLIS, FGIS…FGWI, LGLA…QAIT, FFLG…YYLL, VLLA…AALL, and SYAL…VTII.

It belongs to the AAE transporter (TC 2.A.81) family.

The protein resides in the cell membrane. This is an uncharacterized protein from Francisella tularensis subsp. tularensis (strain SCHU S4 / Schu 4).